The sequence spans 23 residues: Protein NS0 (23 aa).

Functionally, may play a role inhost modulation. Is not involved in viral protein synthesis or DNA replication. This is Protein NS0 (NS0) from Porcine circovirus 2 (PCV2).